Reading from the N-terminus, the 305-residue chain is Carbonic anhydrase 5A, mitochondrial (305 aa).

A mitochondrion-targeting transit peptide spans 1-38; that stretch reads MLGRNTWKTSAFSFLVEQMWAPLWSRSMRPGRWCSQRS. An Alpha-carbonic anhydrase domain is found at 39–296; that stretch reads CAWQTSNNTL…LMNRKVWASF (258 aa). Zn(2+) contacts are provided by H130, H132, and H155.

Belongs to the alpha-carbonic anhydrase family. It depends on Zn(2+) as a cofactor.

The protein localises to the mitochondrion. It carries out the reaction hydrogencarbonate + H(+) = CO2 + H2O. With respect to regulation, activated by L- and D-histidine. Activated by L- and D-phenylalanine. Activated by L-adrenaline. Inhibited by coumarins, sulfonamide derivatives such as acetazolamide and Foscarnet (phosphonoformate trisodium salt). Activated by histamine. Mitochondrial carbonic anhydrase that catalyzes the reversible conversion of carbon dioxide to bicarbonate/HCO3. Mitochondria are impermeable to HCO3, and thus this intramitochondrial carbonic anhydrase is pivotal in providing HCO3 for multiple mitochondrial enzymes that catalyze the formation of essential metabolites of intermediary metabolism in the urea and Krebs cycles. This is Carbonic anhydrase 5A, mitochondrial from Homo sapiens (Human).